Here is a 337-residue protein sequence, read N- to C-terminus: ERI1 exoribonuclease 3 (337 aa).

The region spanning 146–320 is the Exonuclease domain; the sequence is FLVLDFEATC…DDCKNIANIM (175 aa). 3 residues coordinate Mg(2+): D150, E152, and D249. Catalysis depends on E152, which acts as the Proton acceptor. Position 152 (E152) interacts with AMP. Residue H307 is the Proton acceptor of the active site. H307 is an AMP binding site. D312 lines the Mg(2+) pocket.

Interacts with PRNP. It depends on Mg(2+) as a cofactor. As to expression, highly expressed in the brain, heart, thyroid and testis. Expressed at low levels in the muscle cells, liver, pancreas and kidney.

The polypeptide is ERI1 exoribonuclease 3 (Eri3) (Mus musculus (Mouse)).